The sequence spans 244 residues: MTGEQLAHWIEESTSTVFFGGAGMSTESGIPDFRSAGGLYTTQHDLPFPAEYMLSHSCLVEHPAEFFDFYRTYLVHPQARPNAGHRALAALERAGQVSTIITQNIDGLHQEAGSRQVIELHGSVHRNRCLACGRAHPLSVIMDAPGVPRCSCGGMVRPEVVLYEESLRSQDLDNATTAISTADLLIVGGTSLNVYPAAALLRFFRGRHLVFINREATGYDRAADLVIHDGLGKTLSAVQRAVMP.

Positions 1-244 (MTGEQLAHWI…LSAVQRAVMP (244 aa)) constitute a Deacetylase sirtuin-type domain. A22, T26, F33, R34, Q103, I105, D106, and H121 together coordinate NAD(+). F33 contacts nicotinamide. Nicotinamide contacts are provided by I105 and D106. The Proton acceptor role is filled by H121. C129, C132, C150, and C152 together coordinate Zn(2+). NAD(+) contacts are provided by T190, S191, N213, and L231.

Belongs to the sirtuin family. Class U subfamily. The cofactor is Zn(2+).

It localises to the cytoplasm. The enzyme catalyses N(6)-acetyl-L-lysyl-[protein] + NAD(+) + H2O = 2''-O-acetyl-ADP-D-ribose + nicotinamide + L-lysyl-[protein]. Its function is as follows. NAD-dependent protein deacetylase which modulates the activities of several enzymes which are inactive in their acetylated form. The protein is NAD-dependent protein deacetylase of Cutibacterium acnes (strain DSM 16379 / KPA171202) (Propionibacterium acnes).